A 467-amino-acid polypeptide reads, in one-letter code: Replication factor A 51 kDa subunit (467 aa).

Residues 23–105 (WWIRARVADK…SNVNNDYELT (83 aa)) constitute a DNA-binding region (OB). Residues 313–335 (CPTCNKKVTEEGAQGDRFRCEKC) form a C4-type zinc finger.

Belongs to the replication factor A protein 1 family. In terms of assembly, component of the heterotrimeric canonical replication protein A complex (RPA). The N-terminus is blocked.

It localises to the nucleus. Functionally, as part of the heterotrimeric replication protein A complex (RPA/RP-A), binds and stabilizes single-stranded DNA intermediates, that form during DNA replication or upon DNA stress. It prevents their reannealing and in parallel, recruits and activates different proteins and complexes involved in DNA metabolism. Thereby, it plays an essential role both in DNA replication and the cellular response to DNA damage. In Crithidia fasciculata, this protein is Replication factor A 51 kDa subunit (RPA1).